A 95-amino-acid chain; its full sequence is Aspartyl/glutamyl-tRNA(Asn/Gln) amidotransferase subunit C (95 aa).

This sequence belongs to the GatC family. Heterotrimer of A, B and C subunits.

The catalysed reaction is L-glutamyl-tRNA(Gln) + L-glutamine + ATP + H2O = L-glutaminyl-tRNA(Gln) + L-glutamate + ADP + phosphate + H(+). It carries out the reaction L-aspartyl-tRNA(Asn) + L-glutamine + ATP + H2O = L-asparaginyl-tRNA(Asn) + L-glutamate + ADP + phosphate + 2 H(+). Its function is as follows. Allows the formation of correctly charged Asn-tRNA(Asn) or Gln-tRNA(Gln) through the transamidation of misacylated Asp-tRNA(Asn) or Glu-tRNA(Gln) in organisms which lack either or both of asparaginyl-tRNA or glutaminyl-tRNA synthetases. The reaction takes place in the presence of glutamine and ATP through an activated phospho-Asp-tRNA(Asn) or phospho-Glu-tRNA(Gln). The chain is Aspartyl/glutamyl-tRNA(Asn/Gln) amidotransferase subunit C from Clostridium botulinum (strain 657 / Type Ba4).